The chain runs to 420 residues: Fasciclin-like arabinogalactan protein 4 (420 aa).

The signal sequence occupies residues 1–28 (MANVISISHFTLLALPYLLLLLSSTAAA). FAS1 domains follow at residues 29 to 177 (INVT…DSLI) and 205 to 351 (GINL…SKVL). N-linked (GlcNAc...) asparagine glycans are attached at residues asparagine 30, asparagine 40, asparagine 135, asparagine 154, asparagine 167, asparagine 207, asparagine 312, and asparagine 317. Residues 360–388 (SGQPVATAPPQEISLSPESSSEQPSRLVS) are disordered. Low complexity predominate over residues 368–384 (PPQEISLSPESSSEQPS). Residue serine 396 is the site of GPI-anchor amidated serine attachment. Residues 397–420 (GAVKRPLGFLVLWCWCIAFCYVLV) constitute a propeptide, removed in mature form.

This sequence belongs to the fasciclin-like AGP family. Expressed in all plant organs and tissues, including guard cells in the leaf.

The protein resides in the cell membrane. In terms of biological role, may be a cell surface adhesion protein that is required for normal cell expansion. The sequence is that of Fasciclin-like arabinogalactan protein 4 (FLA4) from Arabidopsis thaliana (Mouse-ear cress).